The primary structure comprises 303 residues: Acetylglutamate kinase (303 aa).

Residues 76–77 (GG), R98, and N199 each bind substrate.

This sequence belongs to the acetylglutamate kinase family. ArgB subfamily.

It localises to the cytoplasm. It catalyses the reaction N-acetyl-L-glutamate + ATP = N-acetyl-L-glutamyl 5-phosphate + ADP. It participates in amino-acid biosynthesis; L-arginine biosynthesis; N(2)-acetyl-L-ornithine from L-glutamate: step 2/4. Functionally, catalyzes the ATP-dependent phosphorylation of N-acetyl-L-glutamate. This is Acetylglutamate kinase from Clavibacter sepedonicus (Clavibacter michiganensis subsp. sepedonicus).